A 492-amino-acid chain; its full sequence is WD repeat-containing protein JIP5 (492 aa).

5 WD repeats span residues R127–K166, K178–S217, R236–S274, D276–Q317, and R365–N405. 2 stretches are compositionally biased toward acidic residues: residues E404–E414 and D422–T433. Residues E404 to M472 are disordered. Residues K449 to N462 show a composition bias toward basic and acidic residues.

It belongs to the WD repeat WDR55 family. In terms of assembly, interacts with BRE1, BUD27 and GIS1.

It is found in the nucleus. It localises to the nucleolus. The chain is WD repeat-containing protein JIP5 (JIP5) from Saccharomyces cerevisiae (strain YJM789) (Baker's yeast).